The chain runs to 378 residues: TelA-like protein SAS1347 (378 aa).

The protein belongs to the TelA family.

In Staphylococcus aureus (strain MSSA476), this protein is TelA-like protein SAS1347.